The primary structure comprises 451 residues: Phosphoglucosamine mutase (451 aa).

Serine 102 functions as the Phosphoserine intermediate in the catalytic mechanism. Positions 102, 243, 245, and 247 each coordinate Mg(2+). Serine 102 bears the Phosphoserine mark.

Belongs to the phosphohexose mutase family. Mg(2+) serves as cofactor. Post-translationally, activated by phosphorylation.

The catalysed reaction is alpha-D-glucosamine 1-phosphate = D-glucosamine 6-phosphate. Catalyzes the conversion of glucosamine-6-phosphate to glucosamine-1-phosphate. The polypeptide is Phosphoglucosamine mutase (Chelativorans sp. (strain BNC1)).